The primary structure comprises 189 residues: Peptidyl-tRNA hydrolase (189 aa).

Tyr-15 serves as a coordination point for tRNA. His-20 functions as the Proton acceptor in the catalytic mechanism. Phe-66, Asn-68, and Asn-114 together coordinate tRNA.

This sequence belongs to the PTH family. As to quaternary structure, monomer.

The protein resides in the cytoplasm. The enzyme catalyses an N-acyl-L-alpha-aminoacyl-tRNA + H2O = an N-acyl-L-amino acid + a tRNA + H(+). In terms of biological role, hydrolyzes ribosome-free peptidyl-tRNAs (with 1 or more amino acids incorporated), which drop off the ribosome during protein synthesis, or as a result of ribosome stalling. Functionally, catalyzes the release of premature peptidyl moieties from peptidyl-tRNA molecules trapped in stalled 50S ribosomal subunits, and thus maintains levels of free tRNAs and 50S ribosomes. The polypeptide is Peptidyl-tRNA hydrolase (Streptococcus gordonii (strain Challis / ATCC 35105 / BCRC 15272 / CH1 / DL1 / V288)).